The chain runs to 320 residues: Flavonol 4'-sulfotransferase (320 aa).

Residue 69-74 coordinates 3'-phosphoadenylyl sulfate; sequence KSGTTW. The Proton acceptor role is filled by His129. 3'-phosphoadenylyl sulfate-binding positions include Arg151, Ser159, Tyr217, and 285–287; that span reads RKA.

It belongs to the sulfotransferase 1 family. In terms of tissue distribution, highest in shoot tips and lowest in mature leaves and roots.

Its subcellular location is the cytoplasm. The enzyme catalyses quercetin 3-sulfate + 3'-phosphoadenylyl sulfate = quercetin 3,4'-bissulfate + adenosine 3',5'-bisphosphate + H(+). Its activity is regulated as follows. No requirement for divalent cations and insensitive to p-chloromercuribenzoate, iodoacetate, or iodoacetamide. In terms of biological role, sulfotransferase that utilizes 3'-phospho-5'-adenylyl sulfate (PAPS) as sulfonate donor to catalyze the sulfate conjugation of quercetin 3-sulfate &gt; kaempferol 3-sulfate &gt; isorhamnetin 3-sulfate &gt; patuletin 3-sulfate, but not tamarixetin 3-sulfate. O-sulfation of position 4' of flavonol. May play a role in auxin transport. This chain is Flavonol 4'-sulfotransferase, found in Flaveria chlorifolia (Clasping yellowtops).